The chain runs to 525 residues: MALEQLCAVLKVLLITVLVVEGIAVAQKTQDGQNIGIKHIPATQCGIWVRTSNGGHFASPNYPDSYPPNKECIYILEAAPRQRIELTFDERYYIEPSFECRFDHLEIRDGPFGFSPLIDRYCGMKSPALIRSTGRFMWIKFSSDEELEGLGFRAKYSFIPDPDFTYLGGILNPIPDCQFELSGADGIVRSSQVEQEEKTKPGQAVDCIWTIKATPKAKIYLRFLDYQMEHSNECKRNFVAVYDGSSAIENLKAKFCSTVANDVMLKTGVGVIRMWADEGSRLSRFRMLFTSFVEPPCTSSTFFCHSNMCINNSLVCNGVQNCAYPWDENHCKEKKKAGLFEQITKTHGTIIGITSGIVLVLLIISILVQVKQPRKKVMACKTAFNKTGFQEVFDPPHYELFSLREKEISADLADLSEELDNYQKLRRSSTASRCIHDHHCGSQASSVKQSRTNLSSMELPFRNDFAQPQPMKTFNSTFKKSSYTFKQAHECPEQALEDRVMEEIPCEIYVRGRDDSAQASISIDF.

The signal sequence occupies residues 1–22 (MALEQLCAVLKVLLITVLVVEG). At 23 to 347 (IAVAQKTQDG…GLFEQITKTH (325 aa)) the chain is on the extracellular side. 7 disulfide bridges follow: cysteine 45–cysteine 72, cysteine 100–cysteine 122, cysteine 177–cysteine 207, cysteine 234–cysteine 256, cysteine 297–cysteine 309, cysteine 304–cysteine 322, and cysteine 316–cysteine 331. 2 consecutive CUB domains span residues 45–159 (CGIW…YSFI) and 177–292 (CQFE…FTSF). Residues 296–332 (PCTSSTFFCHSNMCINNSLVCNGVQNCAYPWDENHCK) form the LDL-receptor class A domain. Asparagine 311 carries an N-linked (GlcNAc...) asparagine glycan. Residues 348–368 (GTIIGITSGIVLVLLIISILV) form a helical membrane-spanning segment. The Cytoplasmic segment spans residues 369 to 525 (QVKQPRKKVM…SAQASISIDF (157 aa)). Position 409 is a phosphoserine (serine 409).

In terms of assembly, interacts with GRIK2 and GRIK3, but neither with AMPA-nor with NMDA-sensitive glutamate receptors. In terms of processing, N-glycosylated. In terms of tissue distribution, expressed in brain tissues, including cerebellar granule cells (at protein level).

It localises to the cell membrane. Accessory subunit of neuronal kainate-sensitive glutamate receptors, GRIK2 and GRIK3. Increases kainate-receptor channel activity, slowing the decay kinetics of the receptors, without affecting their expression at the cell surface, and increasing the open probability of the receptor channels. Modulates the agonist sensitivity of kainate receptors. Slows the decay of kainate receptor-mediated excitatory postsynaptic currents (EPSCs), thus directly influencing synaptic transmission. This is Neuropilin and tolloid-like protein 2 (Neto2) from Mus musculus (Mouse).